A 609-amino-acid polypeptide reads, in one-letter code: Protein FRIGIDA (609 aa).

Low complexity predominate over residues 1–18 (MSNYPPTVAAQPTTTANP). The tract at residues 1 to 31 (MSNYPPTVAAQPTTTANPLLQRHQSEQRRRE) is disordered. 2 coiled-coil regions span residues 60 to 97 (DELA…LESN) and 409 to 440 (QIKE…LMEE). 2 disordered regions span residues 454–488 (RPRL…DDQD) and 587–609 (SEER…LDPK). Over residues 474-484 (YRDRSFPSQRD) the composition is skewed to basic and acidic residues. Positions 594 to 609 (LSNQRSPRSNSSLDPK) are enriched in polar residues.

It belongs to the Frigida family. In terms of assembly, homodimer. Component of the transcription activator complex FRI-C composed of FRI, FRL1, SUF4, FLX and FES1. Interacts (via N-terminus) with FRL1 and (via C-terminus) with FLX (via N-terminus), SUF4 (via C-terminus) and FES1 (via C-terminus). Interacts with ASHH2 and RIN1, a component of the SWR1 chromatin-remodeling complex. Interacts with CBP20, FIP1 and FIP2. In terms of tissue distribution, expressed in ovules, but not in stamens.

Its subcellular location is the nucleus speckle. In terms of biological role, required for the regulation of flowering time in the late-flowering phenotype. Involved in the enrichment of a WDR5A-containing COMPASS-like complex at the 'FLOWERING LOCUS C' that trimethylates histone H3 'Lys-4', leading to FLC up-regulation and RNA levels increase. Variants with an early-flowering phenotype (Including cv. Columbia, cv. Landsberg Erecta and cv. Wassilewskija) show loss-of-function mutations of FRI. Able to delay flowering independently of FRL1 activity. Dispensable for the reactivation of FLC in early embryogenesis, but required to maintain high levels of FLC expression in later embryonic and vegetative development. Suppresses the repression of FLC by the autonomous pathway, but has no effect on the expression of the genes involved in this pathway. This is Protein FRIGIDA from Arabidopsis thaliana (Mouse-ear cress).